Here is a 396-residue protein sequence, read N- to C-terminus: Argininosuccinate synthase (396 aa).

Residue 9–17 (AYSGGLDTS) participates in ATP binding. Tyr85 lines the L-citrulline pocket. ATP is bound at residue Gly115. The L-aspartate site is built by Thr117, Asn121, and Asp122. Residue Asn121 coordinates L-citrulline. L-citrulline is bound by residues Arg125, Ser173, Glu258, and Tyr270.

It belongs to the argininosuccinate synthase family. Type 1 subfamily. In terms of assembly, homotetramer.

The protein localises to the cytoplasm. It catalyses the reaction L-citrulline + L-aspartate + ATP = 2-(N(omega)-L-arginino)succinate + AMP + diphosphate + H(+). It functions in the pathway amino-acid biosynthesis; L-arginine biosynthesis; L-arginine from L-ornithine and carbamoyl phosphate: step 2/3. This Streptococcus agalactiae serotype V (strain ATCC BAA-611 / 2603 V/R) protein is Argininosuccinate synthase.